Consider the following 475-residue polypeptide: Bifunctional protein HldE (475 aa).

Residues 1–321 (MADKIDISLY…RALHQITASH (321 aa)) form a ribokinase region. 197-200 (NLKE) contributes to the ATP binding site. Residue D266 is part of the active site. Residues 346 to 475 (MTNGCFDILH…TSRLVEKMLN (130 aa)) are cytidylyltransferase.

In the N-terminal section; belongs to the carbohydrate kinase PfkB family. The protein in the C-terminal section; belongs to the cytidylyltransferase family. Homodimer.

The enzyme catalyses D-glycero-beta-D-manno-heptose 7-phosphate + ATP = D-glycero-beta-D-manno-heptose 1,7-bisphosphate + ADP + H(+). It carries out the reaction D-glycero-beta-D-manno-heptose 1-phosphate + ATP + H(+) = ADP-D-glycero-beta-D-manno-heptose + diphosphate. Its pathway is nucleotide-sugar biosynthesis; ADP-L-glycero-beta-D-manno-heptose biosynthesis; ADP-L-glycero-beta-D-manno-heptose from D-glycero-beta-D-manno-heptose 7-phosphate: step 1/4. The protein operates within nucleotide-sugar biosynthesis; ADP-L-glycero-beta-D-manno-heptose biosynthesis; ADP-L-glycero-beta-D-manno-heptose from D-glycero-beta-D-manno-heptose 7-phosphate: step 3/4. Catalyzes the phosphorylation of D-glycero-D-manno-heptose 7-phosphate at the C-1 position to selectively form D-glycero-beta-D-manno-heptose-1,7-bisphosphate. Its function is as follows. Catalyzes the ADP transfer from ATP to D-glycero-beta-D-manno-heptose 1-phosphate, yielding ADP-D-glycero-beta-D-manno-heptose. This is Bifunctional protein HldE from Coxiella burnetii (strain Dugway 5J108-111).